We begin with the raw amino-acid sequence, 204 residues long: Putative AgrB-like protein (204 aa).

Transmembrane regions (helical) follow at residues 51–73, 87–107, 111–131, 151–168, and 173–190; these read VYGI…SYLW, LNCT…FQNI, NWIV…FAPA, AMIG…IPFA, and LIMV…PLTY.

Belongs to the AgrB family.

The protein resides in the cell membrane. May be involved in the proteolytic processing of a quorum sensing system signal molecule precursor. The sequence is that of Putative AgrB-like protein from Listeria innocua serovar 6a (strain ATCC BAA-680 / CLIP 11262).